Reading from the N-terminus, the 425-residue chain is Adenosine 3'-phospho 5'-phosphosulfate transporter 1 (425 aa).

A run of 9 helical transmembrane segments spans residues 27–47 (FLIL…IYYV), 102–122 (VIIL…AMGV), 147–167 (TQFL…MILA), 232–252 (YSWF…LFLL), 263–283 (ITYT…FDAF), 303–323 (MMFG…IEQG), 342–360 (VFLL…YSTI), 365–387 (PIVF…TIMY), and 391–411 (LTFL…VDIH).

This sequence belongs to the nucleotide-sugar transporter family. SLC35B subfamily.

The protein resides in the golgi apparatus membrane. Mediates the transport of adenosine 3'-phospho 5'-phosphosulfate (PAPS), from cytosol into Golgi. PAPS is a universal sulfuryl donor for sulfation events that take place in the Golgi. The protein is Adenosine 3'-phospho 5'-phosphosulfate transporter 1 (pst-1) of Caenorhabditis elegans.